A 634-amino-acid polypeptide reads, in one-letter code: DNA-directed RNA polymerase subunit gamma (634 aa).

Zn(2+)-binding residues include Cys74, Cys76, Cys89, and Cys92. Asp471, Asp473, and Asp475 together coordinate Mg(2+).

It belongs to the RNA polymerase beta' chain family. RpoC1 subfamily. In cyanobacteria the RNAP catalytic core is composed of 2 alpha, 1 beta, 1 beta', 1 gamma and 1 omega subunit. When a sigma factor is associated with the core the holoenzyme is formed, which can initiate transcription. It depends on Mg(2+) as a cofactor. Requires Zn(2+) as cofactor.

It catalyses the reaction RNA(n) + a ribonucleoside 5'-triphosphate = RNA(n+1) + diphosphate. Its function is as follows. DNA-dependent RNA polymerase catalyzes the transcription of DNA into RNA using the four ribonucleoside triphosphates as substrates. This chain is DNA-directed RNA polymerase subunit gamma, found in Prochlorococcus marinus (strain AS9601).